Here is a 307-residue protein sequence, read N- to C-terminus: Mitochondrial brown fat uncoupling protein 1 (307 aa).

Residues 2–10 (VNPTTSEVH) are Mitochondrial intermembrane-facing. A helical membrane pass occupies residues 11-32 (PTMGVKIFSAGVAACLADIITF). Solcar repeat units follow at residues 11–102 (PTMG…VQEY), 111–201 (PTLG…MKGA), and 210–295 (DDVP…LKKE). Topologically, residues 33-73 (PLDTAKVRLQIQGEGQISSTIRYKGVLGTITTLAKTEGLPK) are mitochondrial matrix. Position 56 (Lys-56) interacts with fatty acid 16:0. Residues 74–96 (LYSGLPAGIQRQISFASLRIGLY) traverse the membrane as a helical segment. The Mitochondrial intermembrane segment spans residues 97–116 (DTVQEYFSSGKETPPTLGNR). The helical transmembrane segment at 117-133 (ISAGLMTGGVAVFIGQP) threads the bilayer. The Mitochondrial matrix segment spans residues 134–178 (TEVVKVRLQAQSHLHGIKPRYTGTYNAYRIIATTESFSTLWKGTT). A helical transmembrane segment spans residues 179–195 (PNLLRNVIINCVELVTY). Over 196-212 (DLMKGALVNNQILADDV) the chain is Mitochondrial intermembrane. Residues 213-232 (PCHLLSAFVAGFCTTFLASP) traverse the membrane as a helical segment. The Mitochondrial matrix segment spans residues 233–266 (ADVVKTRFINSLPGQYPSVPSCAMTMLTKEGPTA). Cys-254 carries the cysteine sulfenic acid (-SOH) modification. A helical transmembrane segment spans residues 267–289 (FFKGFVPSFLRLASWNVIMFVCF). A fatty acid 16:0-binding site is contributed by Lys-269. Residues 290–307 (EQLKKELSKSRQTVDCTT) are Mitochondrial intermembrane-facing.

The protein belongs to the mitochondrial carrier (TC 2.A.29) family. In terms of assembly, most probably functions as a monomer. Binds one purine nucleotide per monomer. However, has also been suggested to function as a homodimer or a homotetramer. Tightly associates with cardiolipin in the mitochondrion inner membrane; may stabilize and regulate its activity. Post-translationally, may undergo sulfenylation upon cold exposure. May increase the sensitivity of UCP1 thermogenic function to the activation by noradrenaline probably through structural effects. May undergo ubiquitin-mediated proteasomal degradation. In terms of tissue distribution, brown adipose tissue.

The protein localises to the mitochondrion inner membrane. The enzyme catalyses H(+)(in) = H(+)(out). With respect to regulation, has no constitutive proton transporter activity and has to be activated by long-chain fatty acids/LCFAs. Inhibited by purine nucleotides. Both purine nucleotides and LCFAs bind the cytosolic side of the transporter and directly compete to activate or inhibit it. Activated by noradrenaline and reactive oxygen species. Despite lacking canonical translational encoding for selenocysteine, a small pool of the protein has been observed to selectively incorporate selenocysteine at 'Cys-254'. Selenocysteine-modified protein is highly sensitive to redox modification and may constitute a pool of protein highly sensitive to activation by elevated levels of reactive oxygen species (ROS). In terms of biological role, mitochondrial protein responsible for thermogenic respiration, a specialized capacity of brown adipose tissue and beige fat that participates in non-shivering adaptive thermogenesis to temperature and diet variations and more generally to the regulation of energy balance. Functions as a long-chain fatty acid/LCFA and proton symporter, simultaneously transporting one LCFA and one proton through the inner mitochondrial membrane. However, LCFAs remaining associated with the transporter via their hydrophobic tails, it results in an apparent transport of protons activated by LCFAs. Thereby, dissipates the mitochondrial proton gradient and converts the energy of substrate oxydation into heat instead of ATP. Regulates the production of reactive oxygen species/ROS by mitochondria. The chain is Mitochondrial brown fat uncoupling protein 1 from Mesocricetus auratus (Golden hamster).